A 287-amino-acid polypeptide reads, in one-letter code: Lys-63-specific deubiquitinase (287 aa).

Residues 33 to 176 (VHLESDAFLV…YTCFQSVQAQ (144 aa)) form the MPN domain. His-119, His-121, and Asp-132 together coordinate Zn(2+). Positions 119-132 (HSHPHITVWPSHVD) match the JAMM motif motif. Residues 256–283 (LQWLEDRLEQNKQSIITLQKEKELLTQE) are a coiled coil.

It belongs to the peptidase M67A family. BRCC36 subfamily. As to quaternary structure, monomer. Homodimer. Component of the BRISC complex, at least composed of abraxas2, brcc3, babam1 and babam2. Interacts with abraxas2; the interaction is direct and may form a heterotetramer. Component of the BRCA1-A complex. Both the BRCA1-A complex and the BRISC complex bind polyubiquitin. Zn(2+) is required as a cofactor.

The protein resides in the nucleus. It localises to the cytoplasm. The protein localises to the cytoskeleton. Its subcellular location is the spindle pole. In terms of biological role, metalloprotease that specifically cleaves 'Lys-63'-linked polyubiquitin chains, leaving the last ubiquitin chain attached to its substrates. Catalytic subunit of the BRISC complex, a multiprotein complex that specifically cleaves 'Lys-63'-linked ubiquitin in various substrates; brcc3 does not have activity by itself, but needs to be associated into a higher-order assembly, for minimal in vitro activity. This is Lys-63-specific deubiquitinase from Danio rerio (Zebrafish).